The primary structure comprises 320 residues: uncharacterized protein (320 aa).

In terms of assembly, interacts with VP1054, VP39 and VP80.

The protein localises to the virion. Its subcellular location is the host nucleus. The protein resides in the host cytoplasm. Plays a role in nucleocapsid assembly and is essential for viral replication. Distributed over the cylindrical capsid sheath of nucleocapsid. This is an uncharacterized protein from Lepidoptera (butterflies and moths).